The sequence spans 459 residues: Bifunctional protein GlmU (459 aa).

Positions 1 to 229 (MSNYAIILAA…FDESLGVNDR (229 aa)) are pyrophosphorylase. Residues 8–11 (LAAG), lysine 22, glutamine 72, and 77–78 (GT) contribute to the UDP-N-acetyl-alpha-D-glucosamine site. Aspartate 102 contributes to the Mg(2+) binding site. UDP-N-acetyl-alpha-D-glucosamine is bound by residues glycine 139, glutamate 154, asparagine 169, and asparagine 227. Asparagine 227 provides a ligand contact to Mg(2+). A linker region spans residues 230-250 (VALATAEKVMRHRIARQHMVN). An N-acetyltransferase region spans residues 251–459 (GVTVVNPDSA…NKKPHHPSQK (209 aa)). Arginine 332 and lysine 350 together coordinate UDP-N-acetyl-alpha-D-glucosamine. The active-site Proton acceptor is the histidine 362. UDP-N-acetyl-alpha-D-glucosamine contacts are provided by tyrosine 365 and asparagine 376. Acetyl-CoA contacts are provided by residues alanine 379, 385–386 (NY), serine 404, alanine 422, and arginine 439.

The protein in the N-terminal section; belongs to the N-acetylglucosamine-1-phosphate uridyltransferase family. It in the C-terminal section; belongs to the transferase hexapeptide repeat family. In terms of assembly, homotrimer. The cofactor is Mg(2+).

It is found in the cytoplasm. The catalysed reaction is alpha-D-glucosamine 1-phosphate + acetyl-CoA = N-acetyl-alpha-D-glucosamine 1-phosphate + CoA + H(+). The enzyme catalyses N-acetyl-alpha-D-glucosamine 1-phosphate + UTP + H(+) = UDP-N-acetyl-alpha-D-glucosamine + diphosphate. Its pathway is nucleotide-sugar biosynthesis; UDP-N-acetyl-alpha-D-glucosamine biosynthesis; N-acetyl-alpha-D-glucosamine 1-phosphate from alpha-D-glucosamine 6-phosphate (route II): step 2/2. It functions in the pathway nucleotide-sugar biosynthesis; UDP-N-acetyl-alpha-D-glucosamine biosynthesis; UDP-N-acetyl-alpha-D-glucosamine from N-acetyl-alpha-D-glucosamine 1-phosphate: step 1/1. It participates in bacterial outer membrane biogenesis; LPS lipid A biosynthesis. Catalyzes the last two sequential reactions in the de novo biosynthetic pathway for UDP-N-acetylglucosamine (UDP-GlcNAc). The C-terminal domain catalyzes the transfer of acetyl group from acetyl coenzyme A to glucosamine-1-phosphate (GlcN-1-P) to produce N-acetylglucosamine-1-phosphate (GlcNAc-1-P), which is converted into UDP-GlcNAc by the transfer of uridine 5-monophosphate (from uridine 5-triphosphate), a reaction catalyzed by the N-terminal domain. The chain is Bifunctional protein GlmU from Streptococcus agalactiae serotype III (strain NEM316).